The chain runs to 23 residues: Acidic phospholipase A2 Cvv-E6c (23 aa).

It depends on Ca(2+) as a cofactor. Post-translationally, contains 7 disulfide bonds. Expressed by the venom gland.

The protein resides in the secreted. The enzyme catalyses a 1,2-diacyl-sn-glycero-3-phosphocholine + H2O = a 1-acyl-sn-glycero-3-phosphocholine + a fatty acid + H(+). Functionally, snake venom phospholipase A2 (PLA2) that significantly inhibits ADP-induced platelet aggregation in platelet-rich plasma of human, rabbit and guinea pig. PLA2 catalyzes the calcium-dependent hydrolysis of the 2-acyl groups in 3-sn-phosphoglycerides. The sequence is that of Acidic phospholipase A2 Cvv-E6c from Crotalus viridis viridis (Prairie rattlesnake).